The sequence spans 378 residues: Protein RecA (378 aa).

Gly-79–Thr-86 serves as a coordination point for ATP.

Belongs to the RecA family.

Its subcellular location is the cytoplasm. Its function is as follows. Can catalyze the hydrolysis of ATP in the presence of single-stranded DNA, the ATP-dependent uptake of single-stranded DNA by duplex DNA, and the ATP-dependent hybridization of homologous single-stranded DNAs. It interacts with LexA causing its activation and leading to its autocatalytic cleavage. The chain is Protein RecA from Streptococcus pyogenes serotype M28 (strain MGAS6180).